The following is a 96-amino-acid chain: Co-chaperonin GroES 1 (96 aa).

The protein belongs to the GroES chaperonin family. Heptamer of 7 subunits arranged in a ring. Interacts with the chaperonin GroEL.

It localises to the cytoplasm. In terms of biological role, together with the chaperonin GroEL, plays an essential role in assisting protein folding. The GroEL-GroES system forms a nano-cage that allows encapsulation of the non-native substrate proteins and provides a physical environment optimized to promote and accelerate protein folding. GroES binds to the apical surface of the GroEL ring, thereby capping the opening of the GroEL channel. The sequence is that of Co-chaperonin GroES 1 from Vibrio vulnificus (strain CMCP6).